The chain runs to 284 residues: tRNA (guanine-N(7)-)-methyltransferase (284 aa).

Residues G102, 125-126 (EI), 160-161 (NT), and C180 each bind S-adenosyl-L-methionine. D183 is an active-site residue. Position 258 to 260 (258 to 260 (TEE)) interacts with S-adenosyl-L-methionine.

Belongs to the class I-like SAM-binding methyltransferase superfamily. TrmB family. As to quaternary structure, forms a complex with TRM82.

The protein resides in the nucleus. It carries out the reaction guanosine(46) in tRNA + S-adenosyl-L-methionine = N(7)-methylguanosine(46) in tRNA + S-adenosyl-L-homocysteine. The protein operates within tRNA modification; N(7)-methylguanine-tRNA biosynthesis. Functionally, catalyzes the formation of N(7)-methylguanine at position 46 (m7G46) in tRNA. This is tRNA (guanine-N(7)-)-methyltransferase from Podospora anserina (strain S / ATCC MYA-4624 / DSM 980 / FGSC 10383) (Pleurage anserina).